A 204-amino-acid chain; its full sequence is Large ribosomal subunit protein uL4 (204 aa).

Residues 53 to 74 (AYVSGGGKKPWRQKGRGGARAG) form a disordered region.

The protein belongs to the universal ribosomal protein uL4 family. Part of the 50S ribosomal subunit.

One of the primary rRNA binding proteins, this protein initially binds near the 5'-end of the 23S rRNA. It is important during the early stages of 50S assembly. It makes multiple contacts with different domains of the 23S rRNA in the assembled 50S subunit and ribosome. Its function is as follows. Forms part of the polypeptide exit tunnel. The sequence is that of Large ribosomal subunit protein uL4 from Campylobacter curvus (strain 525.92).